The chain runs to 350 residues: MIIARIFGHLPIATTWEHHVTDILELARTKVLNNGEGLNKEEVLQVLQLDEARIPELLELAHEVRLKWCGEEVEVEGIISLKTGGCPEDCHFCSQSGLFESPVRSAWLDIAGLVEAAKQTQKSGATEFCIVAAVKGPDERLMSQLEEAVAAIKSEVDIEVAASIGILTQEQVDRLKAAGVHRYNHNLETARSYFPNVVTTHSWESRRETLRMVGEAGMEVCSGGIIGMGETLEQRAEFACDLAELNPTEVPMNFLDPRPGTPFADYEVLDTTDALRAIGAFRLALPKTILRFAGGRELTLGDLGTEQGLLGGINAVIVGNYLTTLGRPMEQDLDMLGKLRLPIKALNASV.

One can recognise a Radical SAM core domain in the interval 71–296 (EEVEVEGIIS…KTILRFAGGR (226 aa)). [4Fe-4S] cluster is bound by residues Cys86, Cys90, and Cys93. 3 residues coordinate [2Fe-2S] cluster: Cys129, Cys221, and Arg291.

The protein belongs to the radical SAM superfamily. Biotin synthase family. As to quaternary structure, homodimer. It depends on [4Fe-4S] cluster as a cofactor. [2Fe-2S] cluster is required as a cofactor.

It carries out the reaction (4R,5S)-dethiobiotin + (sulfur carrier)-SH + 2 reduced [2Fe-2S]-[ferredoxin] + 2 S-adenosyl-L-methionine = (sulfur carrier)-H + biotin + 2 5'-deoxyadenosine + 2 L-methionine + 2 oxidized [2Fe-2S]-[ferredoxin]. It participates in cofactor biosynthesis; biotin biosynthesis; biotin from 7,8-diaminononanoate: step 2/2. In terms of biological role, catalyzes the conversion of dethiobiotin (DTB) to biotin by the insertion of a sulfur atom into dethiobiotin via a radical-based mechanism. The chain is Biotin synthase 1 from Corynebacterium diphtheriae (strain ATCC 700971 / NCTC 13129 / Biotype gravis).